A 78-amino-acid polypeptide reads, in one-letter code: Alpha-neurotoxin homolog 1 (78 aa).

An N-terminal signal peptide occupies residues 1–21 (MKTLLLTLVVVTIVCLDFGYT). Intrachain disulfides connect cysteine 24-cysteine 42, cysteine 37-cysteine 57, cysteine 59-cysteine 70, and cysteine 71-cysteine 76.

Belongs to the three-finger toxin family. Short-chain subfamily. Orphan group XII sub-subfamily. In terms of tissue distribution, expressed by the venom gland.

Its subcellular location is the secreted. The chain is Alpha-neurotoxin homolog 1 from Micrurus corallinus (Brazilian coral snake).